A 328-amino-acid chain; its full sequence is Sphingolipid delta(4)-desaturase DES1-like (328 aa).

3 helical membrane passes run 50–70 (PLAF…ATLL), 78–98 (ILTV…LAIH), and 114–134 (WLGI…FQKY). The short motif at 98 to 102 (HELSH) is the Histidine box-1 element. A Histidine box-2 motif is present at residues 135 to 139 (HLEHH). 3 consecutive transmembrane segments (helical) span residues 164–184 (LSKS…PLFL), 192–212 (WEFT…YFFG), and 217–237 (AYLI…GHFI). The Histidine box-3 motif lies at 266-270 (HNEHH).

This sequence belongs to the fatty acid desaturase type 1 family. DEGS subfamily.

The protein resides in the endoplasmic reticulum membrane. It catalyses the reaction an N-acylsphinganine + 2 Fe(II)-[cytochrome b5] + O2 + 2 H(+) = an N-acylsphing-4-enine + 2 Fe(III)-[cytochrome b5] + 2 H2O. Functionally, sphingolipid-delta-4-desaturase required for the biosynthesis of delta-4-unsaturated sphingolipids and derivatives. The chain is Sphingolipid delta(4)-desaturase DES1-like from Oryza sativa subsp. japonica (Rice).